A 174-amino-acid polypeptide reads, in one-letter code: Endoribonuclease YbeY (174 aa).

Residues histidine 124, histidine 128, and histidine 134 each contribute to the Zn(2+) site.

The protein belongs to the endoribonuclease YbeY family. The cofactor is Zn(2+).

The protein localises to the cytoplasm. In terms of biological role, single strand-specific metallo-endoribonuclease involved in late-stage 70S ribosome quality control and in maturation of the 3' terminus of the 16S rRNA. The chain is Endoribonuclease YbeY from Synechococcus elongatus (strain ATCC 33912 / PCC 7942 / FACHB-805) (Anacystis nidulans R2).